A 422-amino-acid chain; its full sequence is Interleukin-11 receptor subunit alpha (422 aa).

The N-terminal stretch at M1–A22 is a signal peptide. Over S24 to V370 the chain is Extracellular. Residues P27–G110 form the Ig-like C2-type domain. Cystine bridges form between C48–C94, C120–C130, and C170–C180. Fibronectin type-III domains lie at P112–D219 and P220–T317. N127 carries N-linked (GlcNAc...) asparagine glycosylation. N194 carries an N-linked (GlcNAc...) asparagine glycan. Residues W304–S308 carry the WSXWS motif motif. The disordered stretch occupies residues E335 to R355. The helical transmembrane segment at S371–L391 threads the bilayer. At R392–L422 the chain is on the cytoplasmic side.

The protein belongs to the type I cytokine receptor family. Type 3 subfamily. On IL11 binding, forms a multimer complex with IL6ST/gp130. Post-translationally, a short soluble form is also released from the membrane by proteolysis. The sIL11RA is formed either by limited proteolysis of membrane-bound receptors, a process referred to as ectodomain shedding, or directly secreted from the cells after alternative mRNA splicing. mIL11RA is cleaved by the proteases ADAM10, ELANE and PRTN3.

The protein resides in the membrane. It is found in the secreted. Receptor for interleukin-11 (IL11). The receptor systems for IL6, LIF, OSM, CNTF, IL11 and CT1 can utilize IL6ST for initiating signal transmission. The IL11/IL11RA/IL6ST complex may be involved in the control of proliferation and/or differentiation of skeletogenic progenitor or other mesenchymal cells. Essential for the normal development of craniofacial bones and teeth. Restricts suture fusion and tooth number. In terms of biological role, soluble form of IL11 receptor (sIL11RA) that acts as an agonist of IL11 activity. The IL11:sIL11RA complex binds to IL6ST/gp130 on cell surfaces and induces signaling also on cells that do not express membrane-bound IL11RA in a process called IL11 trans-signaling. The polypeptide is Interleukin-11 receptor subunit alpha (IL11RA) (Pongo abelii (Sumatran orangutan)).